Consider the following 151-residue polypeptide: Large ribosomal subunit protein bL9 (151 aa).

Belongs to the bacterial ribosomal protein bL9 family.

Binds to the 23S rRNA. This is Large ribosomal subunit protein bL9 from Lactobacillus delbrueckii subsp. bulgaricus (strain ATCC 11842 / DSM 20081 / BCRC 10696 / JCM 1002 / NBRC 13953 / NCIMB 11778 / NCTC 12712 / WDCM 00102 / Lb 14).